The following is a 206-amino-acid chain: Thymidylate kinase (206 aa).

An ATP-binding site is contributed by 11 to 18 (GIDGAGKT).

Belongs to the thymidylate kinase family.

The enzyme catalyses dTMP + ATP = dTDP + ADP. Its function is as follows. Phosphorylation of dTMP to form dTDP in both de novo and salvage pathways of dTTP synthesis. The polypeptide is Thymidylate kinase (Paraburkholderia phytofirmans (strain DSM 17436 / LMG 22146 / PsJN) (Burkholderia phytofirmans)).